The primary structure comprises 316 residues: Coproporphyrin III ferrochelatase (316 aa).

Fe-coproporphyrin III contacts are provided by residues Y13, R30, 46–47 (RY), S54, and Y125. The Fe(2+) site is built by H183 and E264.

It belongs to the ferrochelatase family.

Its subcellular location is the cytoplasm. The catalysed reaction is Fe-coproporphyrin III + 2 H(+) = coproporphyrin III + Fe(2+). It participates in porphyrin-containing compound metabolism; protoheme biosynthesis. Involved in coproporphyrin-dependent heme b biosynthesis. Catalyzes the insertion of ferrous iron into coproporphyrin III to form Fe-coproporphyrin III. This Geobacillus thermodenitrificans (strain NG80-2) protein is Coproporphyrin III ferrochelatase.